A 235-amino-acid polypeptide reads, in one-letter code: Putative cobalt transport protein CbiM 2 (235 aa).

The next 7 helical transmembrane spans lie at 8–28, 40–60, 74–94, 107–127, 135–155, 160–180, and 185–205; these read LPAIWCIVWFVVSIPVVAYGV, GILPVLAVAGAFIFVLSSLKM, GIGAIIFGPAITAVLSTIVLI, TLGANVFSMGIVGPIVAYLIY, LNFYLIVFLAATLGDWATYIV, LALAFPAGDILTFGGFFSSFS, and IFAITQVPLAIVEGAVSALLF.

Belongs to the CbiM family. In terms of assembly, forms an energy-coupling factor (ECF) transporter complex composed of an ATP-binding protein (A component, CbiO), a transmembrane protein (T component, CbiQ) and 2 possible substrate-capture proteins (S components, CbiM and CbiN) of unknown stoichimetry.

It localises to the cell membrane. The protein operates within cofactor biosynthesis; adenosylcobalamin biosynthesis. In terms of biological role, part of the energy-coupling factor (ECF) transporter complex CbiMNOQ involved in cobalt import. The polypeptide is Putative cobalt transport protein CbiM 2 (Methanosarcina barkeri (strain Fusaro / DSM 804)).